Here is a 117-residue protein sequence, read N- to C-terminus: Photosystem II reaction center Psb28 protein (117 aa).

It belongs to the Psb28 family. As to quaternary structure, part of the photosystem II complex.

The protein localises to the cellular thylakoid membrane. This Prochlorococcus marinus (strain MIT 9215) protein is Photosystem II reaction center Psb28 protein.